Consider the following 228-residue polypeptide: MDNNFKIKDLPKNERPQERLIRYGAEVLSNSELLAVILRTGTKNQNIMMLASSLIKETGGLDQLFNQSIEELTKIKGIGVTKAVQILALSELSKRFKTYKSGNEYKISTPLDVSNLVMEDMKYLKQEKLKILILNTKNIVTYIRDVFIGTLNSSIVHPREIFCEAIKKNGASIIICHNHPSGDPTPSKEDINITLRLKECGKLIGIDLLDHIIIGENKYVSMKEKGTI.

Residues 106-228 form the MPN domain; it reads KISTPLDVSN…YVSMKEKGTI (123 aa). Residues H177, H179, and D190 each contribute to the Zn(2+) site. Positions 177-190 match the JAMM motif motif; sequence HNHPSGDPTPSKED.

This sequence belongs to the UPF0758 family.

In Clostridium botulinum (strain ATCC 19397 / Type A), this protein is UPF0758 protein CLB_3028.